The chain runs to 592 residues: Monocopper oxidase-like protein SKS2 (592 aa).

The N-terminal stretch at 1-23 (MAATDFFFAFVFSFALIFGFSFA) is a signal peptide. N-linked (GlcNAc...) asparagine glycans are attached at residues Asn-61, Asn-110, Asn-172, Asn-203, Asn-259, Asn-280, Asn-295, Asn-344, Asn-364, Asn-433, and Asn-447. Position 455 (His-455) interacts with Cu cation. N-linked (GlcNAc...) asparagine glycosylation is found at Asn-476 and Asn-536. Ser-564 carries GPI-anchor amidated serine lipidation. A propeptide spans 565-592 (ATKSMTNGQLILIFSMMMVLLSSFSSFC) (removed in mature form).

This sequence belongs to the multicopper oxidase family. It depends on Cu cation as a cofactor.

It is found in the cell membrane. This Arabidopsis thaliana (Mouse-ear cress) protein is Monocopper oxidase-like protein SKS2 (SKS2).